The chain runs to 581 residues: Transcription factor GTE2 (581 aa).

Residues 130–153 are disordered; sequence VKKTKTKKKKIGHGQKRSNPFATD. The span at 131–145 shows a compositional bias: basic residues; the sequence is KKTKTKKKKIGHGQK. Residues 169-275 enclose the Bromo domain; it reads KVLKSMMTTC…SQFDVWFNPT (107 aa). Disordered stretches follow at residues 329–399 and 470–581; these read PLLP…KREM and KRQG…KEAP. Residues 346-365 show a composition bias toward pro residues; it reads PSPPPSPVQPPPPPSPPPQP. In terms of domain architecture, NET spans 389–470; the sequence is PKAKDPNKRE…NYRKMASKIK (82 aa). Basic and acidic residues-rich tracts occupy residues 390 to 399 and 493 to 503; these read KAKDPNKREM and SAEKRGRKGGE. The span at 504-517 shows a compositional bias: acidic residues; that stretch reads AGEEDVDIGEDIPV. Positions 530-564 are enriched in low complexity; it reads TAAAASGGSSSSGSFSSSGSSSSSDSESGSSSGSD.

The protein localises to the nucleus. This is Transcription factor GTE2 (GTE2) from Arabidopsis thaliana (Mouse-ear cress).